The sequence spans 220 residues: Ribose-5-phosphate isomerase A (220 aa).

Substrate contacts are provided by residues 28–31, 81–84, and 94–97; these read TGST, DGAD, and KGGG. Glutamate 103 functions as the Proton acceptor in the catalytic mechanism. Lysine 121 is a substrate binding site.

The protein belongs to the ribose 5-phosphate isomerase family. In terms of assembly, homodimer.

The catalysed reaction is aldehydo-D-ribose 5-phosphate = D-ribulose 5-phosphate. The protein operates within carbohydrate degradation; pentose phosphate pathway; D-ribose 5-phosphate from D-ribulose 5-phosphate (non-oxidative stage): step 1/1. Catalyzes the reversible conversion of ribose-5-phosphate to ribulose 5-phosphate. This is Ribose-5-phosphate isomerase A from Aromatoleum aromaticum (strain DSM 19018 / LMG 30748 / EbN1) (Azoarcus sp. (strain EbN1)).